The chain runs to 780 residues: Mediator of RNA polymerase II transcription subunit 15 (780 aa).

Residues 1–124 form an interaction with nhr-49 region; the sequence is MSEEDWPSPK…PQPTSAQARN (124 aa). Residues 2–96 form an interaction with sbp-1 region; sequence SEEDWPSPKF…SPPCTTAALL (95 aa). Disordered regions lie at residues 91-152, 166-363, and 564-597; these read TTAA…APSA, PSPD…QGMM, and GPGP…GTPN. Positions 125 to 139 are enriched in low complexity; sequence PPVTVATTQASTTPS. Over residues 225–245 the composition is skewed to gly residues; that stretch reads PPNGYGGYGMMNGPPGSGAPM. Over residues 296-316 the composition is skewed to polar residues; the sequence is QGATPTGPSSVLESLINQPQQ. Composition is skewed to low complexity over residues 333–353 and 574–594; these read AAQR…QQQR and SMSG…NPMG.

The protein belongs to the Mediator complex subunit 15 family. In terms of assembly, component of the Mediator complex. Interacts with nhr-49, nhr-64 and sbp-1. Expressed in the intestine and head neurons.

The protein resides in the nucleus. Component of the Mediator complex, a coactivator involved in regulated gene transcription of nearly all RNA polymerase II-dependent genes. Mediator functions as a bridge to convey information from gene-specific regulatory proteins to the basal RNA polymerase II transcription machinery. Mediator is recruited to promoters by direct interactions with regulatory proteins and serves as a scaffold for the assembly of a functional preinitiation complex with RNA polymerase II and the general transcription factors. Required for regulated expression of genes controlling fatty acid desaturation by transcription factors including sbp-1 and nhr-49. Involved in the response to simulated microgravity, in concert with sbp-1, probably acting in the intestine. The chain is Mediator of RNA polymerase II transcription subunit 15 (mdt-15) from Caenorhabditis elegans.